A 345-amino-acid chain; its full sequence is S-adenosylmethionine:tRNA ribosyltransferase-isomerase (345 aa).

The protein belongs to the QueA family. In terms of assembly, monomer.

Its subcellular location is the cytoplasm. The catalysed reaction is 7-aminomethyl-7-carbaguanosine(34) in tRNA + S-adenosyl-L-methionine = epoxyqueuosine(34) in tRNA + adenine + L-methionine + 2 H(+). Its pathway is tRNA modification; tRNA-queuosine biosynthesis. Its function is as follows. Transfers and isomerizes the ribose moiety from AdoMet to the 7-aminomethyl group of 7-deazaguanine (preQ1-tRNA) to give epoxyqueuosine (oQ-tRNA). The chain is S-adenosylmethionine:tRNA ribosyltransferase-isomerase from Shewanella sp. (strain MR-4).